Here is a 269-residue protein sequence, read N- to C-terminus: uncharacterized protein (269 aa).

103–110 (GIFTMGKS) is a binding site for ATP.

This is an uncharacterized protein from Mycoplasma pneumoniae (strain ATCC 29342 / M129 / Subtype 1) (Mycoplasmoides pneumoniae).